Reading from the N-terminus, the 675-residue chain is UvrABC system protein B (675 aa).

The 388-residue stretch at 35 to 422 (EGVSDGLMFQ…ADNVVEQVVR (388 aa)) folds into the Helicase ATP-binding domain. 48-55 (GVTGSGKT) provides a ligand contact to ATP. A Beta-hairpin motif is present at residues 101-124 (YYDYYQPEAYVPTRDLFIEKDSSI). The Helicase C-terminal domain maps to 439–605 (QVDDLLGEIH…GVSKAVRELI (167 aa)). Residues 633–668 (AREIRRLEKLMMDHARNLEFEQAAAARDALNALKSR) form the UVR domain.

The protein belongs to the UvrB family. As to quaternary structure, forms a heterotetramer with UvrA during the search for lesions. Interacts with UvrC in an incision complex.

Its subcellular location is the cytoplasm. In terms of biological role, the UvrABC repair system catalyzes the recognition and processing of DNA lesions. A damage recognition complex composed of 2 UvrA and 2 UvrB subunits scans DNA for abnormalities. Upon binding of the UvrA(2)B(2) complex to a putative damaged site, the DNA wraps around one UvrB monomer. DNA wrap is dependent on ATP binding by UvrB and probably causes local melting of the DNA helix, facilitating insertion of UvrB beta-hairpin between the DNA strands. Then UvrB probes one DNA strand for the presence of a lesion. If a lesion is found the UvrA subunits dissociate and the UvrB-DNA preincision complex is formed. This complex is subsequently bound by UvrC and the second UvrB is released. If no lesion is found, the DNA wraps around the other UvrB subunit that will check the other stand for damage. In Bordetella bronchiseptica (strain ATCC BAA-588 / NCTC 13252 / RB50) (Alcaligenes bronchisepticus), this protein is UvrABC system protein B.